The chain runs to 421 residues: Type II methyltransferase M.SfiI (421 aa).

It belongs to the N(4)/N(6)-methyltransferase family. N(4) subfamily.

It catalyses the reaction a 2'-deoxycytidine in DNA + S-adenosyl-L-methionine = an N(4)-methyl-2'-deoxycytidine in DNA + S-adenosyl-L-homocysteine + H(+). In terms of biological role, a beta subtype methylase, recognizes the double-stranded sequence 5'-GGCCNNNNNGGCC-3', methylates C-? on both strands, and protects the DNA from cleavage by the SfiI endonuclease. This is Type II methyltransferase M.SfiI from Streptomyces fimbriatus.